We begin with the raw amino-acid sequence, 76 residues long: Exodeoxyribonuclease 7 small subunit (76 aa).

This sequence belongs to the XseB family. In terms of assembly, heterooligomer composed of large and small subunits.

Its subcellular location is the cytoplasm. It carries out the reaction Exonucleolytic cleavage in either 5'- to 3'- or 3'- to 5'-direction to yield nucleoside 5'-phosphates.. Functionally, bidirectionally degrades single-stranded DNA into large acid-insoluble oligonucleotides, which are then degraded further into small acid-soluble oligonucleotides. In Staphylococcus epidermidis (strain ATCC 35984 / DSM 28319 / BCRC 17069 / CCUG 31568 / BM 3577 / RP62A), this protein is Exodeoxyribonuclease 7 small subunit.